Reading from the N-terminus, the 662-residue chain is p-hydroxybenzoic acid efflux pump subunit AaeB (662 aa).

The next 11 helical transmembrane spans lie at 22–42 (FAFK…HLQL), 52–72 (AAIV…SGAI), 76–96 (GMLR…IIIA), 102–122 (VVML…SSLV), 129–149 (IFGL…GTPL), 161–181 (EIVL…PRSI), 378–398 (LFWL…IAVV), 415–435 (FLFG…FIMP), 439–459 (QSML…GLEV), 465–485 (GSLG…PMTF), and 491–511 (LDSA…IMLI).

Belongs to the aromatic acid exporter ArAE (TC 2.A.85) family.

The protein localises to the cell inner membrane. In terms of biological role, forms an efflux pump with AaeA. Could function as a metabolic relief valve, allowing to eliminate certain compounds when they accumulate to high levels in the cell. The protein is p-hydroxybenzoic acid efflux pump subunit AaeB of Pectobacterium atrosepticum (strain SCRI 1043 / ATCC BAA-672) (Erwinia carotovora subsp. atroseptica).